Reading from the N-terminus, the 132-residue chain is MEHKEVVLLLLLFLKSAPTETGPSVQECYHSNGQSYRGTYFTTVTGRTCQAWSSMTPHQHSRTPEKYPNDGLISNYCRNPDCSAGPWCYTTDPNVRWEYCNLTRCSDDEGTVFVPLTVIPVPSLEDSFIQVA.

The N-terminal stretch at 1 to 21 is a signal peptide; it reads MEHKEVVLLLLLFLKSAPTET. The region spanning 27–105 is the Kringle domain; that stretch reads ECYHSNGQSY…RWEYCNLTRC (79 aa). 3 cysteine pairs are disulfide-bonded: Cys-28–Cys-105, Cys-49–Cys-88, and Cys-77–Cys-100. Asn-101 carries N-linked (GlcNAc...) asparagine glycosylation.

In terms of tissue distribution, expressed in liver but not in other tissues tested.

It is found in the secreted. The polypeptide is Putative apolipoprotein(a)-like protein 2 (LPAL2) (Homo sapiens (Human)).